A 303-amino-acid chain; its full sequence is Methionyl-tRNA formyltransferase (303 aa).

111 to 114 (SLLP) contacts (6S)-5,6,7,8-tetrahydrofolate.

This sequence belongs to the Fmt family.

The enzyme catalyses L-methionyl-tRNA(fMet) + (6R)-10-formyltetrahydrofolate = N-formyl-L-methionyl-tRNA(fMet) + (6S)-5,6,7,8-tetrahydrofolate + H(+). Attaches a formyl group to the free amino group of methionyl-tRNA(fMet). The formyl group appears to play a dual role in the initiator identity of N-formylmethionyl-tRNA by promoting its recognition by IF2 and preventing the misappropriation of this tRNA by the elongation apparatus. The chain is Methionyl-tRNA formyltransferase from Ehrlichia chaffeensis (strain ATCC CRL-10679 / Arkansas).